Reading from the N-terminus, the 166-residue chain is Crossover junction endodeoxyribonuclease RuvC (166 aa).

Active-site residues include aspartate 7, glutamate 70, and histidine 143. Mg(2+)-binding residues include aspartate 7, glutamate 70, and histidine 143.

This sequence belongs to the RuvC family. Homodimer which binds Holliday junction (HJ) DNA. The HJ becomes 2-fold symmetrical on binding to RuvC with unstacked arms; it has a different conformation from HJ DNA in complex with RuvA. In the full resolvosome a probable DNA-RuvA(4)-RuvB(12)-RuvC(2) complex forms which resolves the HJ. The cofactor is Mg(2+).

The protein localises to the cytoplasm. It carries out the reaction Endonucleolytic cleavage at a junction such as a reciprocal single-stranded crossover between two homologous DNA duplexes (Holliday junction).. In terms of biological role, the RuvA-RuvB-RuvC complex processes Holliday junction (HJ) DNA during genetic recombination and DNA repair. Endonuclease that resolves HJ intermediates. Cleaves cruciform DNA by making single-stranded nicks across the HJ at symmetrical positions within the homologous arms, yielding a 5'-phosphate and a 3'-hydroxyl group; requires a central core of homology in the junction. The consensus cleavage sequence is 5'-(A/T)TT(C/G)-3'. Cleavage occurs on the 3'-side of the TT dinucleotide at the point of strand exchange. HJ branch migration catalyzed by RuvA-RuvB allows RuvC to scan DNA until it finds its consensus sequence, where it cleaves and resolves the cruciform DNA. The polypeptide is Crossover junction endodeoxyribonuclease RuvC (Thermus thermophilus (strain ATCC BAA-163 / DSM 7039 / HB27)).